A 415-amino-acid polypeptide reads, in one-letter code: Gamma-glutamyl phosphate reductase (415 aa).

Belongs to the gamma-glutamyl phosphate reductase family.

The protein resides in the cytoplasm. The enzyme catalyses L-glutamate 5-semialdehyde + phosphate + NADP(+) = L-glutamyl 5-phosphate + NADPH + H(+). Its pathway is amino-acid biosynthesis; L-proline biosynthesis; L-glutamate 5-semialdehyde from L-glutamate: step 2/2. Catalyzes the NADPH-dependent reduction of L-glutamate 5-phosphate into L-glutamate 5-semialdehyde and phosphate. The product spontaneously undergoes cyclization to form 1-pyrroline-5-carboxylate. In Bacteroides fragilis (strain YCH46), this protein is Gamma-glutamyl phosphate reductase.